An 888-amino-acid chain; its full sequence is Autotaxin (888 aa).

The N-terminal stretch at 1–27 (MARRRSCQLHQVISLFTFAVGVNICLG) is a signal peptide. A propeptide spans 28–35 (VTANRIKR) (removed by furin). N-linked (GlcNAc...) asparagine glycosylation is present at Asn54. 2 consecutive SMB domains span residues 55–98 (ISGS…LKTA) and 99–143 (GGWE…GESH). Intrachain disulfides connect Cys59–Cys76, Cys63–Cys94, Cys74–Cys87, Cys80–Cys86, Cys103–Cys120, Cys108–Cys138, Cys118–Cys131, Cys124–Cys130, Cys149–Cys195, and Cys157–Cys351. The Cell attachment site motif lies at 127 to 129 (RGD). A phosphodiesterase region spans residues 145–502 (VDDDCEEIKT…PTFKYKTKVP (358 aa)). Zn(2+)-binding residues include Asp172 and Thr210. The active-site Nucleophile is Thr210. Residues Thr210, Asn231, and Asp312 each contribute to the 1-(9Z-octadecenoyl)-sn-glycero-3-phosphate site. The 1-hexadecanoyl-sn-glycero-3-phosphate site is built by Thr210, Asn231, and Asp312. Positions 210, 231, and 312 each coordinate 1-tetradecanoyl-sn-glycerol 3-phosphate. The Zn(2+) site is built by Asp312, His316, Asp359, and His360. Disulfide bonds link Cys367–Cys469, Cys414–Cys831, Cys567–Cys692, Cys569–Cys677, and Cys800–Cys810. Asn411 carries an N-linked (GlcNAc...) asparagine glycan. His475 is a Zn(2+) binding site. His475 contacts 1-(9Z-octadecenoyl)-sn-glycero-3-phosphate. His475 contacts 1-hexadecanoyl-sn-glycero-3-phosphate. A 1-tetradecanoyl-sn-glycerol 3-phosphate-binding site is contributed by His475. Residue Asn525 is glycosylated (N-linked (GlcNAc...) asparagine). Positions 623 to 888 (LYGRPAVLYR…TYLQTYESEI (266 aa)) are nuclease-like domain. Ca(2+) is bound by residues Asp765, Asp767, Asp769, Leu771, and Asp773. Asn832 carries an N-linked (GlcNAc...) asparagine glycan. The tract at residues 855–876 (IEHLTSLDFFRKTSRSYPEILT) is required for secretion.

It belongs to the nucleotide pyrophosphatase/phosphodiesterase family. Zn(2+) is required as a cofactor. It depends on Ca(2+) as a cofactor. N-glycosylation, but not furin-cleavage, plays a critical role on secretion and on lysoPLD activity. In terms of processing, the interdomain disulfide bond between Cys-414 and Cys-831 is essential for catalytic activity. As to expression, detected in fetal serum (at protein level).

Its subcellular location is the secreted. The enzyme catalyses a 1-O-alkyl-sn-glycero-3-phosphoethanolamine + H2O = a 1-O-alkyl-sn-glycero-3-phosphate + ethanolamine + H(+). It catalyses the reaction a 1-acyl-sn-glycero-3-phosphoethanolamine + H2O = a 1-acyl-sn-glycero-3-phosphate + ethanolamine + H(+). It carries out the reaction 1-(9Z-octadecenoyl)-sn-glycero-3-phosphoethanolamine + H2O = 1-(9Z-octadecenoyl)-sn-glycero-3-phosphate + ethanolamine + H(+). The catalysed reaction is a 1-O-alkyl-sn-glycero-3-phosphocholine + H2O = a 1-O-alkyl-sn-glycero-3-phosphate + choline + H(+). The enzyme catalyses 1-O-(9Z-octadecenyl)-sn-glycero-3-phosphocholine + H2O = 1-O-(9Z-octadecenyl)-sn-glycero-3-phosphate + choline + H(+). It catalyses the reaction 1-O-hexadecyl-sn-glycero-3-phosphocholine + H2O = 1-O-hexadecyl-sn-glycero-3-phosphate + choline + H(+). It carries out the reaction a 1-O-(1Z-alkenyl)-sn-glycero-3-phosphocholine + H2O = a 1-O-(1Z-alkenyl)-sn-glycero-3-phosphate + choline + H(+). The catalysed reaction is a 1-acyl-sn-glycero-3-phosphocholine + H2O = a 1-acyl-sn-glycero-3-phosphate + choline + H(+). The enzyme catalyses 1-dodecanoyl-sn-glycero-3-phosphocholine + H2O = 1-dodecanoyl-sn-glycerol 3-phosphate + choline + H(+). It catalyses the reaction 1-(9Z-octadecenoyl)-sn-glycero-3-phosphocholine + H2O = 1-(9Z-octadecenoyl)-sn-glycero-3-phosphate + choline + H(+). It carries out the reaction 1-tetradecanoyl-sn-glycero-3-phosphocholine + H2O = 1-tetradecanoyl-sn-glycerol 3-phosphate + choline + H(+). The catalysed reaction is 1-decanoyl-sn-glycero-3-phosphocholine + H2O = 1-decanoyl-sn-glycero-3-phosphate + choline + H(+). The enzyme catalyses 1-octadecanoyl-sn-glycero-3-phosphocholine + H2O = 1-octadecanoyl-sn-glycero-3-phosphate + choline + H(+). It catalyses the reaction 1-hexadecanoyl-sn-glycero-3-phosphocholine + H2O = 1-hexadecanoyl-sn-glycero-3-phosphate + choline + H(+). It carries out the reaction 1-hexanoyl-sn-glycero-3-phosphocholine + H2O = 1-hexanoyl-sn-glycero-3-phosphate + choline + H(+). The catalysed reaction is 1-(9Z,12Z)-octadecadienoyl-sn-glycero-3-phosphocholine + H2O = 1-(9Z,12Z)-octadecadienoyl-sn-glycero-3-phosphate + choline + H(+). The enzyme catalyses sphing-4-enine-phosphocholine + H2O = sphing-4-enine 1-phosphate + choline + H(+). It catalyses the reaction 1-(5Z,8Z,11Z,14Z-eicosatetraenoyl)-sn-glycero-3-phosphocholine + H2O = 1-(5Z,8Z,11Z,14Z-eicosatetraenoyl)-sn-glycero-3-phosphate + choline + H(+). It carries out the reaction a 2-acyl-sn-glycero-3-phosphocholine + H2O = a 2-acyl-sn-glycerol 3-phosphate + choline + H(+). The catalysed reaction is a 1,2-diacyl-sn-glycero-3-phosphocholine + H2O = a 1,2-diacyl-sn-glycero-3-phosphate + choline + H(+). The enzyme catalyses 1,2-dioctanoyl-sn-glycero-3-phosphocholine + H2O = 1,2-dioctanoyl-sn-glycero-3-phosphate + choline + H(+). It catalyses the reaction 1,2-didecanoyl-sn-glycero-3-phosphocholine + H2O = 1,2-didecanoyl-sn-glycero-3-phosphate + choline + H(+). It carries out the reaction a 1-acyl-sn-glycero-3-phospho-L-serine + H2O = a 1-acyl-sn-glycero-3-phosphate + L-serine + H(+). The catalysed reaction is 1-(9Z-octadecenoyl)-sn-glycero-3-phospho-L-serine + H2O = 1-(9Z-octadecenoyl)-sn-glycero-3-phosphate + L-serine + H(+). The enzyme catalyses a 2-acyl-sn-glycero-3-phospho-L-serine + H2O = a 2-acyl-sn-glycerol 3-phosphate + L-serine + H(+). In terms of biological role, secreted lysophospholipase D that hydrolyzes lysophospholipids to produce the signaling molecule lysophosphatidic acid (LPA) in extracellular fluids. Its major substrate is lysophosphatidylcholine. Can also act on sphingosylphosphorylcholine producing sphingosine-1-phosphate, a modulator of cell motility. Can hydrolyze, in vitro, bis-pNPP, to some extent pNP-TMP, and barely ATP. Involved in several motility-related processes such as angiogenesis and neurite outgrowth. Acts as an angiogenic factor by stimulating migration of smooth muscle cells and microtubule formation. Stimulates migration of melanoma cells, probably via a pertussis toxin-sensitive G protein. May have a role in induction of parturition. Possible involvement in cell proliferation and adipose tissue development. Required for LPA production in activated platelets, cleaves the sn-1 lysophospholipids to generate sn-1 lysophosphatidic acids containing predominantly 18:2 and 20:4 fatty acids. Shows a preference for the sn-1 to the sn-2 isomer of 1-O-alkyl-sn-glycero-3-phosphocholine (lyso-PAF). In Bos taurus (Bovine), this protein is Autotaxin.